Consider the following 75-residue polypeptide: 8.9 kDa basic protein (75 aa).

The sequence is that of 8.9 kDa basic protein (P8.9) from Orgyia pseudotsugata (Douglas-fir tussock moth).